The following is a 164-amino-acid chain: Transcription antitermination protein NusB (164 aa).

Belongs to the NusB family.

In terms of biological role, involved in transcription antitermination. Required for transcription of ribosomal RNA (rRNA) genes. Binds specifically to the boxA antiterminator sequence of the ribosomal RNA (rrn) operons. This is Transcription antitermination protein NusB from Mycolicibacterium gilvum (strain PYR-GCK) (Mycobacterium gilvum (strain PYR-GCK)).